Reading from the N-terminus, the 95-residue chain is Large ribosomal subunit protein bL28 (95 aa).

The protein belongs to the bacterial ribosomal protein bL28 family.

This Zymomonas mobilis subsp. mobilis (strain ATCC 31821 / ZM4 / CP4) protein is Large ribosomal subunit protein bL28.